A 133-amino-acid polypeptide reads, in one-letter code: NADPH-dependent 7-cyano-7-deazaguanine reductase (133 aa).

The active-site Thioimide intermediate is the Cys-46. Asp-53 serves as the catalytic Proton donor. Residues 68–70 (VEL) and 87–88 (HE) contribute to the substrate site.

The protein belongs to the GTP cyclohydrolase I family. QueF type 1 subfamily.

Its subcellular location is the cytoplasm. It catalyses the reaction 7-aminomethyl-7-carbaguanine + 2 NADP(+) = 7-cyano-7-deazaguanine + 2 NADPH + 3 H(+). It functions in the pathway tRNA modification; tRNA-queuosine biosynthesis. In terms of biological role, catalyzes the NADPH-dependent reduction of 7-cyano-7-deazaguanine (preQ0) to 7-aminomethyl-7-deazaguanine (preQ1). The protein is NADPH-dependent 7-cyano-7-deazaguanine reductase of Parasynechococcus marenigrum (strain WH8102).